The sequence spans 386 residues: Galactokinase (386 aa).

Substrate is bound at residue 32–35 (EHTD). ATP-binding positions include Ser-66 and 123–129 (GASLSSS). Mg(2+) is bound by residues Ser-129 and Glu-161. Asp-173 (proton acceptor) is an active-site residue. Tyr-223 contributes to the substrate binding site.

Belongs to the GHMP kinase family. GalK subfamily.

It localises to the cytoplasm. The catalysed reaction is alpha-D-galactose + ATP = alpha-D-galactose 1-phosphate + ADP + H(+). Its pathway is carbohydrate metabolism; galactose metabolism. Catalyzes the transfer of the gamma-phosphate of ATP to D-galactose to form alpha-D-galactose-1-phosphate (Gal-1-P). This Staphylococcus saprophyticus subsp. saprophyticus (strain ATCC 15305 / DSM 20229 / NCIMB 8711 / NCTC 7292 / S-41) protein is Galactokinase.